We begin with the raw amino-acid sequence, 252 residues long: 5'-nucleotidase SurE (252 aa).

Residues aspartate 8, aspartate 9, serine 39, and asparagine 96 each coordinate a divalent metal cation.

The protein belongs to the SurE nucleotidase family. The cofactor is a divalent metal cation.

The protein localises to the cytoplasm. The catalysed reaction is a ribonucleoside 5'-phosphate + H2O = a ribonucleoside + phosphate. Functionally, nucleotidase that shows phosphatase activity on nucleoside 5'-monophosphates. In Petrotoga mobilis (strain DSM 10674 / SJ95), this protein is 5'-nucleotidase SurE.